The primary structure comprises 363 residues: MAGNSIGQLFRVTTCGESHGVGLMAIVDGVPPGLALTEEDLQKDLDRRKPGTSKFATQRKEPDQVEIISGVFEGKTTGTPIGLLIRNTDQKSKDYGNIAQTFRPGHADYTYTQKYGFRDYRGGGRSSARETAMRVAAGAIAKKYLAEKFGVVIRGHVTQIGNEVAEKLDWNEVPNNPFFCGDVDAVPRFEALVTSLREQGTSCGAKLEILAEKVPVGWGEPVFDRLDADIAHAMMSINAVKGVEIGDGFAVAGQFGHETRDELTSHGFLANHAGGILGGISSGQTIRVAIALKPTASITTPGKTINLNREDTDVLTKGRHDPCVGVRATPIAEAMLAIVLMDHFLRHRAQNADVVPPFAPIEP.

Arg-48 provides a ligand contact to NADP(+). Residues Arg-125–Ser-127, Asn-238–Ala-239, Gly-278, Lys-293–Ser-297, and Arg-319 each bind FMN.

This sequence belongs to the chorismate synthase family. Homotetramer. FMNH2 serves as cofactor.

The enzyme catalyses 5-O-(1-carboxyvinyl)-3-phosphoshikimate = chorismate + phosphate. It participates in metabolic intermediate biosynthesis; chorismate biosynthesis; chorismate from D-erythrose 4-phosphate and phosphoenolpyruvate: step 7/7. In terms of biological role, catalyzes the anti-1,4-elimination of the C-3 phosphate and the C-6 proR hydrogen from 5-enolpyruvylshikimate-3-phosphate (EPSP) to yield chorismate, which is the branch point compound that serves as the starting substrate for the three terminal pathways of aromatic amino acid biosynthesis. This reaction introduces a second double bond into the aromatic ring system. The chain is Chorismate synthase from Acinetobacter baumannii (strain ACICU).